The chain runs to 248 residues: 2,3-bisphosphoglycerate-dependent phosphoglycerate mutase (248 aa).

Substrate contacts are provided by residues 8–15 (RHGESAWN), 21–22 (TG), Arg60, 87–90 (EKHY), Lys98, 114–115 (RR), and 183–184 (GN). The Tele-phosphohistidine intermediate role is filled by His9. Glu87 acts as the Proton donor/acceptor in catalysis.

It belongs to the phosphoglycerate mutase family. BPG-dependent PGAM subfamily.

The enzyme catalyses (2R)-2-phosphoglycerate = (2R)-3-phosphoglycerate. It functions in the pathway carbohydrate degradation; glycolysis; pyruvate from D-glyceraldehyde 3-phosphate: step 3/5. Functionally, catalyzes the interconversion of 2-phosphoglycerate and 3-phosphoglycerate. This Bacteroides fragilis (strain ATCC 25285 / DSM 2151 / CCUG 4856 / JCM 11019 / LMG 10263 / NCTC 9343 / Onslow / VPI 2553 / EN-2) protein is 2,3-bisphosphoglycerate-dependent phosphoglycerate mutase.